Reading from the N-terminus, the 74-residue chain is Large ribosomal subunit protein bL31 (74 aa).

The protein belongs to the bacterial ribosomal protein bL31 family. Type A subfamily. Part of the 50S ribosomal subunit.

In terms of biological role, binds the 23S rRNA. The chain is Large ribosomal subunit protein bL31 from Chlorobaculum parvum (strain DSM 263 / NCIMB 8327) (Chlorobium vibrioforme subsp. thiosulfatophilum).